A 341-amino-acid polypeptide reads, in one-letter code: Mitochondrial ubiquitin ligase activator of nfkb 1-A (341 aa).

The Cytoplasmic segment spans residues 1–5 (MEDFP). A helical membrane pass occupies residues 6 to 26 (VLEMVCLGSSVALSGLFYYIY). Topologically, residues 27–233 (RKKRKTVDKL…LLMEQEGQAE (207 aa)) are mitochondrial intermembrane. Residues 234 to 254 (VWRVFACICALAGVAVLIWTG) form a helical membrane-spanning segment. Residues 255–341 (RRYYRQLKLR…IKRVVPLYQA (87 aa)) are Cytoplasmic-facing. The segment at 292–329 (CVICLSNPRGCVLLDCGHVCCCFRCYQALPQPFCPICR) adopts an RING-type zinc-finger fold.

As to quaternary structure, homooligomer.

It localises to the mitochondrion outer membrane. It catalyses the reaction S-ubiquitinyl-[E2 ubiquitin-conjugating enzyme]-L-cysteine + [acceptor protein]-L-lysine = [E2 ubiquitin-conjugating enzyme]-L-cysteine + N(6)-ubiquitinyl-[acceptor protein]-L-lysine.. It functions in the pathway protein modification; protein ubiquitination. Functionally, E3 ubiquitin-protein ligase that plays a role in the control of mitochondrial morphology. Promotes mitochondrial fragmentation and influences mitochondrial localization. Inhibits cell growth. E3 ubiquitin ligases accept ubiquitin from an E2 ubiquitin-conjugating enzyme in the form of a thioester and then directly transfer the ubiquitin to targeted substrates. The protein is Mitochondrial ubiquitin ligase activator of nfkb 1-A (mul1a) of Danio rerio (Zebrafish).